The sequence spans 567 residues: DNA ligase B (567 aa).

Lys-132 (N6-AMP-lysine intermediate) is an active-site residue.

The protein belongs to the NAD-dependent DNA ligase family. LigB subfamily.

The catalysed reaction is NAD(+) + (deoxyribonucleotide)n-3'-hydroxyl + 5'-phospho-(deoxyribonucleotide)m = (deoxyribonucleotide)n+m + AMP + beta-nicotinamide D-nucleotide.. Its function is as follows. Catalyzes the formation of phosphodiester linkages between 5'-phosphoryl and 3'-hydroxyl groups in double-stranded DNA using NAD as a coenzyme and as the energy source for the reaction. This Yersinia pseudotuberculosis serotype O:1b (strain IP 31758) protein is DNA ligase B.